A 109-amino-acid polypeptide reads, in one-letter code: Nucleoid-associated protein LGAS_0369 (109 aa).

It belongs to the YbaB/EbfC family. As to quaternary structure, homodimer.

It localises to the cytoplasm. The protein resides in the nucleoid. Binds to DNA and alters its conformation. May be involved in regulation of gene expression, nucleoid organization and DNA protection. The chain is Nucleoid-associated protein LGAS_0369 from Lactobacillus gasseri (strain ATCC 33323 / DSM 20243 / BCRC 14619 / CIP 102991 / JCM 1131 / KCTC 3163 / NCIMB 11718 / NCTC 13722 / AM63).